The following is a 145-amino-acid chain: 3-dehydroquinate dehydratase (145 aa).

The active-site Proton acceptor is Tyr24. The substrate site is built by Asn75, His81, and Asp88. The active-site Proton donor is His101. Substrate-binding positions include 102-103 (IS) and Arg112.

Belongs to the type-II 3-dehydroquinase family. Homododecamer.

The catalysed reaction is 3-dehydroquinate = 3-dehydroshikimate + H2O. The protein operates within metabolic intermediate biosynthesis; chorismate biosynthesis; chorismate from D-erythrose 4-phosphate and phosphoenolpyruvate: step 3/7. Its function is as follows. Catalyzes a trans-dehydration via an enolate intermediate. This Corynebacterium glutamicum (strain ATCC 13032 / DSM 20300 / JCM 1318 / BCRC 11384 / CCUG 27702 / LMG 3730 / NBRC 12168 / NCIMB 10025 / NRRL B-2784 / 534) protein is 3-dehydroquinate dehydratase (aroQ).